The chain runs to 606 residues: DNA mismatch repair protein MutL (606 aa).

The tract at residues 340 to 366 (MNAFRPGYSPSGLRPSPSATWSAATSP) is disordered. Low complexity predominate over residues 353-366 (RPSPSATWSAATSP).

This sequence belongs to the DNA mismatch repair MutL/HexB family.

Its function is as follows. This protein is involved in the repair of mismatches in DNA. It is required for dam-dependent methyl-directed DNA mismatch repair. May act as a 'molecular matchmaker', a protein that promotes the formation of a stable complex between two or more DNA-binding proteins in an ATP-dependent manner without itself being part of a final effector complex. This is DNA mismatch repair protein MutL from Agrobacterium fabrum (strain C58 / ATCC 33970) (Agrobacterium tumefaciens (strain C58)).